Here is a 398-residue protein sequence, read N- to C-terminus: Ribosomal RNA large subunit methyltransferase I (398 aa).

Residues 2 to 79 enclose the PUA domain; it reads SVRLVLAKGR…LSESIDIAFF (78 aa).

Belongs to the methyltransferase superfamily. RlmI family.

The protein resides in the cytoplasm. The catalysed reaction is cytidine(1962) in 23S rRNA + S-adenosyl-L-methionine = 5-methylcytidine(1962) in 23S rRNA + S-adenosyl-L-homocysteine + H(+). Functionally, specifically methylates the cytosine at position 1962 (m5C1962) of 23S rRNA. The protein is Ribosomal RNA large subunit methyltransferase I of Shigella dysenteriae serotype 1 (strain Sd197).